The following is a 261-amino-acid chain: MTHQTHAYHMVNPSPWPLTGALSALLMTSGLIMWFHFNSTTLLMLGLTTNMLTMYQWWRDVVRESTFQGHHTPNVQKGLRYGMILFIISEVLFFTGFFWAFYHSSLAPTPELGGCWPPTGIHPLNPLEVPLLNTSVLLASGVSITWAHHSLMEGNRNHMLQALFITIALGVYFTLLQASEYYEAPFTISDGVYGSTFFVATGFHGLHVIIGSTFLIVCFFRQLKFHFTSSHHFGFEAAAWYWHFVDVVWLFLYVSIYWWGS.

At 1-15 (MTHQTHAYHMVNPSP) the chain is on the mitochondrial matrix side. A helical transmembrane segment spans residues 16-34 (WPLTGALSALLMTSGLIMW). The Mitochondrial intermembrane segment spans residues 35–40 (FHFNST). Residues 41 to 66 (TLLMLGLTTNMLTMYQWWRDVVREST) traverse the membrane as a helical segment. Residues 67–72 (FQGHHT) lie on the Mitochondrial matrix side of the membrane. Residues 73–105 (PNVQKGLRYGMILFIISEVLFFTGFFWAFYHSS) form a helical membrane-spanning segment. At 106–128 (LAPTPELGGCWPPTGIHPLNPLE) the chain is on the mitochondrial intermembrane side. A helical membrane pass occupies residues 129-152 (VPLLNTSVLLASGVSITWAHHSLM). The Mitochondrial matrix segment spans residues 153-155 (EGN). The chain crosses the membrane as a helical span at residues 156-183 (RNHMLQALFITIALGVYFTLLQASEYYE). Residues 184–190 (APFTISD) are Mitochondrial intermembrane-facing. Residues 191 to 223 (GVYGSTFFVATGFHGLHVIIGSTFLIVCFFRQL) traverse the membrane as a helical segment. Over 224-232 (KFHFTSSHH) the chain is Mitochondrial matrix. The chain crosses the membrane as a helical span at residues 233–256 (FGFEAAAWYWHFVDVVWLFLYVSI). Topologically, residues 257-261 (YWWGS) are mitochondrial intermembrane.

It belongs to the cytochrome c oxidase subunit 3 family. As to quaternary structure, component of the cytochrome c oxidase (complex IV, CIV), a multisubunit enzyme composed of 14 subunits. The complex is composed of a catalytic core of 3 subunits MT-CO1, MT-CO2 and MT-CO3, encoded in the mitochondrial DNA, and 11 supernumerary subunits COX4I, COX5A, COX5B, COX6A, COX6B, COX6C, COX7A, COX7B, COX7C, COX8 and NDUFA4, which are encoded in the nuclear genome. The complex exists as a monomer or a dimer and forms supercomplexes (SCs) in the inner mitochondrial membrane with NADH-ubiquinone oxidoreductase (complex I, CI) and ubiquinol-cytochrome c oxidoreductase (cytochrome b-c1 complex, complex III, CIII), resulting in different assemblies (supercomplex SCI(1)III(2)IV(1) and megacomplex MCI(2)III(2)IV(2)).

It localises to the mitochondrion inner membrane. It catalyses the reaction 4 Fe(II)-[cytochrome c] + O2 + 8 H(+)(in) = 4 Fe(III)-[cytochrome c] + 2 H2O + 4 H(+)(out). Component of the cytochrome c oxidase, the last enzyme in the mitochondrial electron transport chain which drives oxidative phosphorylation. The respiratory chain contains 3 multisubunit complexes succinate dehydrogenase (complex II, CII), ubiquinol-cytochrome c oxidoreductase (cytochrome b-c1 complex, complex III, CIII) and cytochrome c oxidase (complex IV, CIV), that cooperate to transfer electrons derived from NADH and succinate to molecular oxygen, creating an electrochemical gradient over the inner membrane that drives transmembrane transport and the ATP synthase. Cytochrome c oxidase is the component of the respiratory chain that catalyzes the reduction of oxygen to water. Electrons originating from reduced cytochrome c in the intermembrane space (IMS) are transferred via the dinuclear copper A center (CU(A)) of subunit 2 and heme A of subunit 1 to the active site in subunit 1, a binuclear center (BNC) formed by heme A3 and copper B (CU(B)). The BNC reduces molecular oxygen to 2 water molecules using 4 electrons from cytochrome c in the IMS and 4 protons from the mitochondrial matrix. This is Cytochrome c oxidase subunit 3 (MT-CO3) from Gazella spekei (Speke's gazelle).